We begin with the raw amino-acid sequence, 522 residues long: Wax ester synthase/diacylglycerol acyltransferase 4 (522 aa).

Residues 1–12 (MEIETRPHISGD) show a composition bias toward basic and acidic residues. Positions 1-20 (MEIETRPHISGDEKEEEQPL) are disordered. At 1-205 (MEIETRPHIS…SDSRLLWLVK (205 aa)) the chain is on the cytoplasmic side. The Proton acceptor role is filled by His149. The chain crosses the membrane as a helical span at residues 206–226 (VIWTAVILGLNTVCDALEFIV). Topologically, residues 227 to 522 (TTLFVKDTET…QIAGLLYRML (296 aa)) are lumenal. N-linked (GlcNAc...) asparagine glycosylation is found at Asn270 and Asn409.

This sequence in the N-terminal section; belongs to the long-chain O-acyltransferase family. In terms of tissue distribution, mostly expressed in roots, flowers and siliques.

The protein resides in the cell membrane. Its subcellular location is the endoplasmic reticulum membrane. The catalysed reaction is an acyl-CoA + a 1,2-diacyl-sn-glycerol = a triacyl-sn-glycerol + CoA. The enzyme catalyses a long chain fatty alcohol + a fatty acyl-CoA = a wax ester + CoA. It participates in glycerolipid metabolism; triacylglycerol biosynthesis. Its pathway is lipid metabolism. Bifunctional wax ester synthase/diacylglycerol acyltransferase. Involved in cuticular wax biosynthesis. This is Wax ester synthase/diacylglycerol acyltransferase 4 from Arabidopsis thaliana (Mouse-ear cress).